Reading from the N-terminus, the 369-residue chain is DNA replication and repair protein RecF (369 aa).

ATP is bound at residue 30-37; sequence GENGQGKT.

It belongs to the RecF family.

It is found in the cytoplasm. In terms of biological role, the RecF protein is involved in DNA metabolism; it is required for DNA replication and normal SOS inducibility. RecF binds preferentially to single-stranded, linear DNA. It also seems to bind ATP. This chain is DNA replication and repair protein RecF, found in Anaeromyxobacter sp. (strain Fw109-5).